The primary structure comprises 135 residues: Small ribosomal subunit protein eS6 (135 aa).

The protein belongs to the eukaryotic ribosomal protein eS6 family.

This chain is Small ribosomal subunit protein eS6, found in Methanococcoides burtonii (strain DSM 6242 / NBRC 107633 / OCM 468 / ACE-M).